The chain runs to 190 residues: RING finger protein 227 (190 aa).

The RING-type zinc-finger motif lies at 18-81 (CNICFRPYNL…RRAVTCPFCR (64 aa)). The interval 108–147 (ARAEREGDPMGSPAKDSGEDGEDDDGEAESEKGAGPPSAG) is disordered. Positions 126-135 (EDGEDDDGEA) are enriched in acidic residues.

This Mus musculus (Mouse) protein is RING finger protein 227.